Reading from the N-terminus, the 485-residue chain is Aspartyl/glutamyl-tRNA(Asn/Gln) amidotransferase subunit B (485 aa).

It belongs to the GatB/GatE family. GatB subfamily. Heterotrimer of A, B and C subunits.

The enzyme catalyses L-glutamyl-tRNA(Gln) + L-glutamine + ATP + H2O = L-glutaminyl-tRNA(Gln) + L-glutamate + ADP + phosphate + H(+). The catalysed reaction is L-aspartyl-tRNA(Asn) + L-glutamine + ATP + H2O = L-asparaginyl-tRNA(Asn) + L-glutamate + ADP + phosphate + 2 H(+). Functionally, allows the formation of correctly charged Asn-tRNA(Asn) or Gln-tRNA(Gln) through the transamidation of misacylated Asp-tRNA(Asn) or Glu-tRNA(Gln) in organisms which lack either or both of asparaginyl-tRNA or glutaminyl-tRNA synthetases. The reaction takes place in the presence of glutamine and ATP through an activated phospho-Asp-tRNA(Asn) or phospho-Glu-tRNA(Gln). In Anaplasma marginale (strain St. Maries), this protein is Aspartyl/glutamyl-tRNA(Asn/Gln) amidotransferase subunit B.